Consider the following 404-residue polypeptide: Sulfate adenylyltransferase (404 aa).

It belongs to the sulfate adenylyltransferase family.

It carries out the reaction sulfate + ATP + H(+) = adenosine 5'-phosphosulfate + diphosphate. Its pathway is sulfur metabolism; hydrogen sulfide biosynthesis; sulfite from sulfate: step 1/3. This chain is Sulfate adenylyltransferase, found in Chlorobaculum tepidum (strain ATCC 49652 / DSM 12025 / NBRC 103806 / TLS) (Chlorobium tepidum).